We begin with the raw amino-acid sequence, 365 residues long: Chorismate synthase (365 aa).

Residues arginine 48 and arginine 54 each contribute to the NADP(+) site. FMN contacts are provided by residues 125-127 (RSS), 238-239 (NA), alanine 278, 293-297 (KPTSS), and arginine 319.

Belongs to the chorismate synthase family. As to quaternary structure, homotetramer. The cofactor is FMNH2.

It catalyses the reaction 5-O-(1-carboxyvinyl)-3-phosphoshikimate = chorismate + phosphate. It participates in metabolic intermediate biosynthesis; chorismate biosynthesis; chorismate from D-erythrose 4-phosphate and phosphoenolpyruvate: step 7/7. Catalyzes the anti-1,4-elimination of the C-3 phosphate and the C-6 proR hydrogen from 5-enolpyruvylshikimate-3-phosphate (EPSP) to yield chorismate, which is the branch point compound that serves as the starting substrate for the three terminal pathways of aromatic amino acid biosynthesis. This reaction introduces a second double bond into the aromatic ring system. This chain is Chorismate synthase, found in Pseudoalteromonas translucida (strain TAC 125).